A 441-amino-acid chain; its full sequence is Tol-Pal system protein TolB (441 aa).

The first 39 residues, 1–39 (MPAMTPAFRRADLTGFLRTYGAALILLLAAMLAWQPAQA), serve as a signal peptide directing secretion.

Belongs to the TolB family. As to quaternary structure, the Tol-Pal system is composed of five core proteins: the inner membrane proteins TolA, TolQ and TolR, the periplasmic protein TolB and the outer membrane protein Pal. They form a network linking the inner and outer membranes and the peptidoglycan layer.

It localises to the periplasm. Its function is as follows. Part of the Tol-Pal system, which plays a role in outer membrane invagination during cell division and is important for maintaining outer membrane integrity. This chain is Tol-Pal system protein TolB, found in Bordetella bronchiseptica (strain ATCC BAA-588 / NCTC 13252 / RB50) (Alcaligenes bronchisepticus).